We begin with the raw amino-acid sequence, 314 residues long: 2,3-dihydroxyphenylpropionate/2,3-dihydroxicinnamic acid 1,2-dioxygenase (314 aa).

His115 acts as the Proton donor in catalysis. The Proton acceptor role is filled by His179.

The protein belongs to the LigB/MhpB extradiol dioxygenase family. As to quaternary structure, homotetramer. Fe(2+) serves as cofactor.

The enzyme catalyses 3-(2,3-dihydroxyphenyl)propanoate + O2 = (2Z,4E)-2-hydroxy-6-oxonona-2,4-dienedioate + H(+). The catalysed reaction is (2E)-3-(2,3-dihydroxyphenyl)prop-2-enoate + O2 = (2Z,4E,7E)-2-hydroxy-6-oxonona-2,4,7-trienedioate + H(+). It functions in the pathway aromatic compound metabolism; 3-phenylpropanoate degradation. Functionally, catalyzes the non-heme iron(II)-dependent oxidative cleavage of 2,3-dihydroxyphenylpropionic acid and 2,3-dihydroxicinnamic acid into 2-hydroxy-6-ketononadienedioate and 2-hydroxy-6-ketononatrienedioate, respectively. The polypeptide is 2,3-dihydroxyphenylpropionate/2,3-dihydroxicinnamic acid 1,2-dioxygenase (Rhodococcus jostii (strain RHA1)).